The chain runs to 658 residues: Carnitine O-palmitoyltransferase 2, mitochondrial (658 aa).

A mitochondrion-targeting transit peptide spans 1-25; sequence MVARLLLRSWSRGLAVGPGAPCRPL. The Mitochondrial matrix portion of the chain corresponds to 26–178; sequence STGFEPSQYL…DLLEPEVFHL (153 aa). Lysine 69 carries the post-translational modification N6-succinyllysine. Lysine 79 bears the N6-acetyllysine mark. At lysine 85 the chain carries N6-succinyllysine. Residues 179 to 208 constitute an intramembrane region (note=Mitochondrial inner membrane); that stretch reads NPAKSDTDTFKRFIRFVPSFLSWYGAYLVN. Residues 209-658 lie on the Mitochondrial matrix side of the membrane; the sequence is AYPLDMSQYY…DALEGKMIKT (450 aa). N6-acetyllysine; alternate is present on lysine 239. Position 239 is an N6-succinyllysine; alternate (lysine 239). Residue histidine 372 is the Proton acceptor of the active site. Lysine 418 is subject to N6-acetyllysine; alternate. Lysine 418 is subject to N6-succinyllysine; alternate. Lysine 424 and lysine 439 each carry N6-succinyllysine. CoA is bound at residue 452–464; that stretch reads GREFLKKQKLSPD. Residues tyrosine 486, serine 488, and threonine 499 each coordinate (R)-carnitine. At lysine 510 the chain carries N6-acetyllysine; alternate. Position 510 is an N6-succinyllysine; alternate (lysine 510).

The protein belongs to the carnitine/choline acetyltransferase family.

Its subcellular location is the mitochondrion inner membrane. It catalyses the reaction (R)-carnitine + hexadecanoyl-CoA = O-hexadecanoyl-(R)-carnitine + CoA. The catalysed reaction is octanoyl-CoA + (R)-carnitine = O-octanoyl-(R)-carnitine + CoA. The enzyme catalyses decanoyl-CoA + (R)-carnitine = O-decanoyl-(R)-carnitine + CoA. It carries out the reaction dodecanoyl-CoA + (R)-carnitine = O-dodecanoyl-R-carnitine + CoA. It catalyses the reaction tetradecanoyl-CoA + (R)-carnitine = O-tetradecanoyl-(R)-carnitine + CoA. The catalysed reaction is (R)-carnitine + octadecanoyl-CoA = O-octadecanoyl-(R)-carnitine + CoA. The enzyme catalyses eicosanoyl-CoA + (R)-carnitine = O-eicosanoyl-(R)-carnitine + CoA. It carries out the reaction (9Z)-tetradecenoyl-CoA + (R)-carnitine = O-(9Z)-tetradecenoyl-(R)-carnitine + CoA. It catalyses the reaction (5Z)-tetradecenoyl-CoA + (R)-carnitine = O-(5Z)-tetradecenoyl-(R)-carnitine + CoA. The catalysed reaction is (R)-carnitine + (9Z)-octadecenoyl-CoA = O-(9Z)-octadecenoyl-(R)-carnitine + CoA. The enzyme catalyses 4,8-dimethylnonanoyl-CoA + (R)-carnitine = O-4,8-dimethylnonanoyl-(R)-carnitine + CoA. Its pathway is lipid metabolism; fatty acid beta-oxidation. In terms of biological role, involved in the intramitochondrial synthesis of acylcarnitines from accumulated acyl-CoA metabolites. Reconverts acylcarnitines back into the respective acyl-CoA esters that can then undergo beta-oxidation, an essential step for the mitochondrial uptake of long-chain fatty acids and their subsequent beta-oxidation in the mitochondrion. Active with medium (C8-C12) and long-chain (C14-C18) acyl-CoA esters. In Bos taurus (Bovine), this protein is Carnitine O-palmitoyltransferase 2, mitochondrial (CPT2).